Here is a 213-residue protein sequence, read N- to C-terminus: Adenylate kinase (213 aa).

Residue 10 to 15 (GAGKGT) participates in ATP binding. The NMP stretch occupies residues 30–59 (STGDMFRAAMANQTEMGVLAKSYIDKGDLV). Residues Thr31, Arg36, 57–59 (DLV), 86–89 (GYPR), and Gln93 contribute to the AMP site. The tract at residues 127 to 160 (GRIINKKTGETFHKIFNPPVGDYKEEDFYQREDD) is LID. Residues Arg128 and 137–138 (TF) contribute to the ATP site. AMP contacts are provided by Arg157 and Arg168. Lys196 provides a ligand contact to ATP.

It belongs to the adenylate kinase family. Monomer.

Its subcellular location is the cytoplasm. It catalyses the reaction AMP + ATP = 2 ADP. It participates in purine metabolism; AMP biosynthesis via salvage pathway; AMP from ADP: step 1/1. Catalyzes the reversible transfer of the terminal phosphate group between ATP and AMP. Plays an important role in cellular energy homeostasis and in adenine nucleotide metabolism. In Streptococcus equi subsp. zooepidemicus (strain H70), this protein is Adenylate kinase.